The chain runs to 417 residues: MINLKLIETNFDEFNKKLIAKNVKNDVLSTLLEAYDELKKDRLELENLQNLQNTKSKEFGEIMRQKGDAGELKKELSINKSKIQTQSEIVKAAEIKLDKIASCVPNIIDDDVPFGADENENVCIKKILQPPVFDFQPKEHFELGEKLGWLDFERGVKLSGSRFTAIKGMGAKLNLAIINYMIDFNQSRGFELVNLPFLVKDEILFGTGQLPKFKDDLYKVDNDELSLYLIPTSEVTATNFYNGEILSEDELPVKFTSYSHCFRKEAGSAGKDTRGMIRQHQFEKVELVSITKPEDSDKMFDEMVSCASDLLKSLGLAHRQMMLCSGDLGFSAAKTIDLEVWLPGQNTYREISSISNCRDFQARRAKIRYKDKNGKNRLVNTLNGSSLAVGRTLVAIMENYQQKDGSIKIPKVLEEYL.

An L-serine-binding site is contributed by 232 to 234 (TSE). ATP is bound at residue 263–265 (RKE). Glu286 contributes to the L-serine binding site. Position 350-353 (350-353 (EISS)) interacts with ATP. Ser385 contributes to the L-serine binding site.

This sequence belongs to the class-II aminoacyl-tRNA synthetase family. Type-1 seryl-tRNA synthetase subfamily. In terms of assembly, homodimer. The tRNA molecule binds across the dimer.

It localises to the cytoplasm. It catalyses the reaction tRNA(Ser) + L-serine + ATP = L-seryl-tRNA(Ser) + AMP + diphosphate + H(+). The catalysed reaction is tRNA(Sec) + L-serine + ATP = L-seryl-tRNA(Sec) + AMP + diphosphate + H(+). It participates in aminoacyl-tRNA biosynthesis; selenocysteinyl-tRNA(Sec) biosynthesis; L-seryl-tRNA(Sec) from L-serine and tRNA(Sec): step 1/1. In terms of biological role, catalyzes the attachment of serine to tRNA(Ser). Is also able to aminoacylate tRNA(Sec) with serine, to form the misacylated tRNA L-seryl-tRNA(Sec), which will be further converted into selenocysteinyl-tRNA(Sec). This is Serine--tRNA ligase from Campylobacter hominis (strain ATCC BAA-381 / DSM 21671 / CCUG 45161 / LMG 19568 / NCTC 13146 / CH001A).